Here is a 262-residue protein sequence, read N- to C-terminus: Flap endonuclease Xni (262 aa).

D105 lines the Mg(2+) pocket. The 5'-3' exonuclease domain maps to 164-251; sequence SQFLDLMALA…NINLKDFRAN (88 aa). L172, A173, P181, I183, and I186 together coordinate K(+). The interaction with DNA stretch occupies residues 185–190; sequence GIGPKS.

Belongs to the Xni family. The cofactor is Mg(2+). Requires K(+) as cofactor.

Has flap endonuclease activity. During DNA replication, flap endonucleases cleave the 5'-overhanging flap structure that is generated by displacement synthesis when DNA polymerase encounters the 5'-end of a downstream Okazaki fragment. The protein is Flap endonuclease Xni of Shewanella putrefaciens (strain CN-32 / ATCC BAA-453).